The following is a 252-amino-acid chain: Chitooligosaccharide deacetylase (252 aa).

Residues His61 and His125 each contribute to the Mg(2+) site.

This sequence belongs to the YdjC deacetylase family. ChbG subfamily. As to quaternary structure, homodimer. Requires Mg(2+) as cofactor.

It localises to the cytoplasm. It carries out the reaction N,N'-diacetylchitobiose + H2O = N-acetyl-beta-D-glucosaminyl-(1-&gt;4)-D-glucosamine + acetate. The enzyme catalyses diacetylchitobiose-6'-phosphate + H2O = N'-monoacetylchitobiose-6'-phosphate + acetate. Its pathway is glycan degradation; chitin degradation. Its function is as follows. Involved in the degradation of chitin. ChbG is essential for growth on the acetylated chitooligosaccharides chitobiose and chitotriose but is dispensable for growth on cellobiose and chitosan dimer, the deacetylated form of chitobiose. Deacetylation of chitobiose-6-P and chitotriose-6-P is necessary for both the activation of the chb promoter by the regulatory protein ChbR and the hydrolysis of phosphorylated beta-glucosides by the phospho-beta-glucosidase ChbF. Catalyzes the removal of only one acetyl group from chitobiose-6-P to yield monoacetylchitobiose-6-P, the inducer of ChbR and the substrate of ChbF. The sequence is that of Chitooligosaccharide deacetylase from Escherichia coli O45:K1 (strain S88 / ExPEC).